A 562-amino-acid polypeptide reads, in one-letter code: Potassium voltage-gated channel subfamily V member 2 (562 aa).

Residues 1 to 10 (MLKQSNERRW) are compositionally biased toward basic and acidic residues. A disordered region spans residues 1-34 (MLKQSNERRWSLSYKPWSTPETEDVPNTGSNQHR). Over 1-163 (MLKQSNERRW…TDEYFFDRDP (163 aa)) the chain is Cytoplasmic. A helical membrane pass occupies residues 164–184 (AVFQLIYNFYTSGVLLVRDEL). Residues 185-269 (CPRSFLEELG…KPFSSVAAKA (85 aa)) lie on the Extracellular side of the membrane. Residues 270 to 290 (MGVATNLFVLISVVALALNTV) traverse the membrane as a helical segment. Residues 291–344 (EEMQHQAEQGTGGGDPRPILEHVEMLCVAFFTLEFLLRLASTPNLQRFARSALN) lie on the Cytoplasmic side of the membrane. Residues 345-365 (LVDLVAILPFYLQLLLECFTS) traverse the membrane as a helical segment. Topologically, residues 366-391 (EDQRHNKDSPREHDLETVGRVGKVGQ) are extracellular. Residues 392–412 (VLRIMRLMRIFRILKLARHST) form a helical; Voltage-sensor membrane-spanning segment. Over 413–427 (GLRAFGFTLRQCYQQ) the chain is Cytoplasmic. A helical transmembrane segment spans residues 428–448 (VGCLMLFITMGIFSFSAAVYS). Residues 449 to 461 (VEHDVPGTNFTSI) lie on the Extracellular side of the membrane. Asn-457 is a glycosylation site (N-linked (GlcNAc...) asparagine). The pore-forming intramembrane region spans 462–482 (LHAWWWAAVSISTVGYGDMYP). The Selectivity filter motif lies at 474–479 (TVGYGD). Residues 483–488 (ETHLGR) lie on the Extracellular side of the membrane. Residues 489–509 (LFAFLCIAFGIILNGMPISIL) form a helical membrane-spanning segment. Topologically, residues 510-562 (YNKFSDYYSKLKAYEYTAIRRERGKVNFMQRATKKMAECLSESHAQSTTRQEN) are cytoplasmic.

The protein belongs to the potassium channel family. V (TC 1.A.1.2) subfamily. Kv8.2/KCNV2 sub-subfamily. In terms of assembly, heteromultimer with KCNB1, KCNC1 and KCNF1. Does not form homomultimers.

Its subcellular location is the cell membrane. In terms of biological role, potassium channel subunit. Modulates channel activity by shifting the threshold and the half-maximal activation to more negative values. The chain is Potassium voltage-gated channel subfamily V member 2 (Kcnv2) from Mus musculus (Mouse).